The following is a 264-amino-acid chain: Thymidylate synthase (264 aa).

DUMP is bound at residue Arg-21. His-51 serves as a coordination point for (6R)-5,10-methylene-5,6,7,8-tetrahydrofolate. 126–127 (RR) is a binding site for dUMP. Cys-146 functions as the Nucleophile in the catalytic mechanism. DUMP is bound by residues 166–169 (RSAD), Asn-177, and 207–209 (HLY). A (6R)-5,10-methylene-5,6,7,8-tetrahydrofolate-binding site is contributed by Asp-169. Ala-263 provides a ligand contact to (6R)-5,10-methylene-5,6,7,8-tetrahydrofolate.

It belongs to the thymidylate synthase family. Bacterial-type ThyA subfamily. In terms of assembly, homodimer.

Its subcellular location is the cytoplasm. The catalysed reaction is dUMP + (6R)-5,10-methylene-5,6,7,8-tetrahydrofolate = 7,8-dihydrofolate + dTMP. It participates in pyrimidine metabolism; dTTP biosynthesis. In terms of biological role, catalyzes the reductive methylation of 2'-deoxyuridine-5'-monophosphate (dUMP) to 2'-deoxythymidine-5'-monophosphate (dTMP) while utilizing 5,10-methylenetetrahydrofolate (mTHF) as the methyl donor and reductant in the reaction, yielding dihydrofolate (DHF) as a by-product. This enzymatic reaction provides an intracellular de novo source of dTMP, an essential precursor for DNA biosynthesis. This Pseudomonas aeruginosa (strain LESB58) protein is Thymidylate synthase.